Here is a 116-residue protein sequence, read N- to C-terminus: Small ribosomal subunit protein bS16 (116 aa).

Belongs to the bacterial ribosomal protein bS16 family.

The polypeptide is Small ribosomal subunit protein bS16 (Chlamydia trachomatis serovar A (strain ATCC VR-571B / DSM 19440 / HAR-13)).